Consider the following 448-residue polypeptide: tRNA modification GTPase MnmE (448 aa).

The (6S)-5-formyl-5,6,7,8-tetrahydrofolate site is built by Arg-25, Glu-82, and Lys-121. One can recognise a TrmE-type G domain in the interval Gly-217–Gly-372. Asn-227 provides a ligand contact to K(+). Residues Asn-227–Ser-232, Thr-246–Thr-252, Asp-271–Gly-274, and Ser-353–Arg-355 contribute to the GTP site. Mg(2+) is bound at residue Ser-231. K(+) contacts are provided by Thr-246, Ile-248, and Thr-251. Mg(2+) is bound at residue Thr-252. Residue Lys-448 coordinates (6S)-5-formyl-5,6,7,8-tetrahydrofolate.

The protein belongs to the TRAFAC class TrmE-Era-EngA-EngB-Septin-like GTPase superfamily. TrmE GTPase family. As to quaternary structure, homodimer. Heterotetramer of two MnmE and two MnmG subunits. K(+) serves as cofactor.

The protein localises to the cytoplasm. Its function is as follows. Exhibits a very high intrinsic GTPase hydrolysis rate. Involved in the addition of a carboxymethylaminomethyl (cmnm) group at the wobble position (U34) of certain tRNAs, forming tRNA-cmnm(5)s(2)U34. The polypeptide is tRNA modification GTPase MnmE (Methylococcus capsulatus (strain ATCC 33009 / NCIMB 11132 / Bath)).